The chain runs to 355 residues: Methylthioribose-1-phosphate isomerase (355 aa).

Substrate contacts are provided by residues 52–54 (RGA), Arg95, and Gln204. Asp245 acts as the Proton donor in catalysis. Position 255-256 (255-256 (NK)) interacts with substrate.

This sequence belongs to the eIF-2B alpha/beta/delta subunits family. MtnA subfamily.

It carries out the reaction 5-(methylsulfanyl)-alpha-D-ribose 1-phosphate = 5-(methylsulfanyl)-D-ribulose 1-phosphate. Its pathway is amino-acid biosynthesis; L-methionine biosynthesis via salvage pathway; L-methionine from S-methyl-5-thio-alpha-D-ribose 1-phosphate: step 1/6. In terms of biological role, catalyzes the interconversion of methylthioribose-1-phosphate (MTR-1-P) into methylthioribulose-1-phosphate (MTRu-1-P). This Acaryochloris marina (strain MBIC 11017) protein is Methylthioribose-1-phosphate isomerase.